A 292-amino-acid polypeptide reads, in one-letter code: Protein SETSIP (292 aa).

Low complexity predominate over residues 1-11 (MAPKRQSPLPL). 2 disordered regions span residues 1-43 (MAPK…EQQE) and 158-292 (LNES…GEDD). Residues 35-78 (KKGEKEQQEAIEHIDEVQNEIDRLNEQDSEEILKVEQKYNKLRQ) are a coiled coil. Positions 237 to 292 (DMDDEEGGEDDDDDDDDGDEGEEELEDIDEGDEDEGEEDEDDDEGEEGEEDEGEDD) are enriched in acidic residues.

This sequence belongs to the nucleosome assembly protein (NAP) family. Expressed in endothelial cell (EC) and protein-induced pluripotent stem (PiPS) endothelial cell (EC) (at protein level).

The protein localises to the cytoplasm. It localises to the nucleus. Functionally, plays a role as a transcriptional activator involved in the early stage of somatic cell reprogramming. Promotes the differentiation of protein-induced pluripotent stem (PiPS) cells into endothelial cells and the formation of vascular-like tubes (in vitro). Involved in the transcription induction of vascular endothelial-cadherin (VE-cadherin) expression. Associates to the VE-cadherin gene promoter. The sequence is that of Protein SETSIP (SETSIP) from Homo sapiens (Human).